Consider the following 793-residue polypeptide: Alanine--tRNA ligase, mitochondrial (793 aa).

ATP-binding positions include R88, W187, and 224–226; that span reads IWN. N226 and D249 together coordinate L-alanine. G253 serves as a coordination point for ATP. H594, H598, C706, and H710 together coordinate Zn(2+).

The protein belongs to the class-II aminoacyl-tRNA synthetase family. Monomer. The cofactor is Zn(2+).

The protein localises to the mitochondrion. The catalysed reaction is tRNA(Ala) + L-alanine + ATP = L-alanyl-tRNA(Ala) + AMP + diphosphate. In terms of biological role, catalyzes the attachment of alanine to tRNA(Ala) in a two-step reaction: alanine is first activated by ATP to form Ala-AMP and then transferred to the acceptor end of tRNA(Ala). Also edits incorrectly charged tRNA(Ala) via its editing domain. This is Alanine--tRNA ligase, mitochondrial from Caenorhabditis elegans.